The chain runs to 428 residues: Adenylosuccinate synthetase (428 aa).

Residues 12-18 (GDEGKGK) and 40-42 (GHT) each bind GTP. Asp-13 acts as the Proton acceptor in catalysis. Residues Asp-13 and Gly-40 each contribute to the Mg(2+) site. IMP is bound by residues 13–16 (DEGK), 38–41 (NAGH), Thr-130, Arg-144, Gln-225, Thr-240, and Arg-304. The active-site Proton donor is His-41. 300–306 (VTTGRAR) serves as a coordination point for substrate. Residues Arg-306, 332-334 (KID), and 414-416 (SVG) contribute to the GTP site.

This sequence belongs to the adenylosuccinate synthetase family. In terms of assembly, homodimer. Mg(2+) is required as a cofactor.

The protein resides in the cytoplasm. It carries out the reaction IMP + L-aspartate + GTP = N(6)-(1,2-dicarboxyethyl)-AMP + GDP + phosphate + 2 H(+). It participates in purine metabolism; AMP biosynthesis via de novo pathway; AMP from IMP: step 1/2. Functionally, plays an important role in the de novo pathway of purine nucleotide biosynthesis. Catalyzes the first committed step in the biosynthesis of AMP from IMP. This chain is Adenylosuccinate synthetase, found in Clostridium botulinum (strain 657 / Type Ba4).